Here is a 235-residue protein sequence, read N- to C-terminus: uncharacterized protein (235 aa).

Disordered stretches follow at residues 1–47 (MSHK…QSTN) and 78–128 (QEHH…KQPQ). Positions 20 to 33 (HPPGQSLSSISWSP) are enriched in polar residues. Low complexity predominate over residues 84–98 (QQQQQQRQNIRSQNS). Positions 106–128 (VQESQWTSSASNSSLKKQEKQPQ) are enriched in polar residues.

This is an uncharacterized protein from Saccharomyces cerevisiae (strain ATCC 204508 / S288c) (Baker's yeast).